Here is a 634-residue protein sequence, read N- to C-terminus: DNA-directed RNA polymerase subunit gamma (634 aa).

Positions 74, 76, 89, and 92 each coordinate Zn(2+). 3 residues coordinate Mg(2+): aspartate 471, aspartate 473, and aspartate 475.

This sequence belongs to the RNA polymerase beta' chain family. RpoC1 subfamily. As to quaternary structure, in cyanobacteria the RNAP catalytic core is composed of 2 alpha, 1 beta, 1 beta', 1 gamma and 1 omega subunit. When a sigma factor is associated with the core the holoenzyme is formed, which can initiate transcription. The cofactor is Mg(2+). Zn(2+) serves as cofactor.

The enzyme catalyses RNA(n) + a ribonucleoside 5'-triphosphate = RNA(n+1) + diphosphate. Functionally, DNA-dependent RNA polymerase catalyzes the transcription of DNA into RNA using the four ribonucleoside triphosphates as substrates. The sequence is that of DNA-directed RNA polymerase subunit gamma from Prochlorococcus marinus (strain MIT 9303).